The sequence spans 496 residues: ATP synthase subunit beta, chloroplastic (496 aa).

An ATP-binding site is contributed by G170–T177.

It belongs to the ATPase alpha/beta chains family. F-type ATPases have 2 components, CF(1) - the catalytic core - and CF(0) - the membrane proton channel. CF(1) has five subunits: alpha(3), beta(3), gamma(1), delta(1), epsilon(1). CF(0) has four main subunits: a(1), b(1), b'(1) and c(9-12).

It localises to the plastid. The protein localises to the chloroplast thylakoid membrane. The enzyme catalyses ATP + H2O + 4 H(+)(in) = ADP + phosphate + 5 H(+)(out). Functionally, produces ATP from ADP in the presence of a proton gradient across the membrane. The catalytic sites are hosted primarily by the beta subunits. In Trachycarpus fortunei (Chinese windmill palm), this protein is ATP synthase subunit beta, chloroplastic.